The chain runs to 356 residues: MTERRIIHIDMDYFFAQVEMRDNPKLKGKPVIVGGKASSRGVVSTASYEARKYGVHSAMPMSQAHKLCPNGYFVTSNFGAYRETSAQIMSIFRSYTDKVEPMSLDEAYLDITELVRPDLPASKIAQYIRKDILEQTHLTASAGVSYNKFLAKLASGMNKPDGLTVIDYQNVHDILMTLDIGDFPGVGKASKKVMHDNGIFNGRDLYEKTEFELIRLFGKRGRGLYNKARGIDHSEVKSSRVRKSVGTERTFATDVNDDEEILRKVWELSGKTAERLNKLQKSAKTVTVKIKTYQFETLSKQMSLRDSVSSEEDIYNIAYLLYNDLKDPDVPIRLIGVTVGNLEQSTNKNMTIYDFI.

The 182-residue stretch at 6–187 (IIHIDMDYFF…LDIGDFPGVG (182 aa)) folds into the UmuC domain. Mg(2+) is bound by residues D10 and D105. The active site involves E106.

Belongs to the DNA polymerase type-Y family. In terms of assembly, monomer. Requires Mg(2+) as cofactor.

The protein localises to the cytoplasm. The enzyme catalyses DNA(n) + a 2'-deoxyribonucleoside 5'-triphosphate = DNA(n+1) + diphosphate. Poorly processive, error-prone DNA polymerase involved in untargeted mutagenesis. Copies undamaged DNA at stalled replication forks, which arise in vivo from mismatched or misaligned primer ends. These misaligned primers can be extended by PolIV. Exhibits no 3'-5' exonuclease (proofreading) activity. May be involved in translesional synthesis, in conjunction with the beta clamp from PolIII. The sequence is that of DNA polymerase IV from Staphylococcus aureus (strain JH1).